A 382-amino-acid chain; its full sequence is Prolargin (382 aa).

The signal sequence occupies residues 1 to 20; sequence MRSPLCWLLPLLILASVAQG. The disordered stretch occupies residues 19-66; the sequence is QGQPTRRPRPGTGPGRRPRPRPRPTPSFPQPDEPAEPTDLPPPLPPGP. 2 stretches are compositionally biased toward pro residues: residues 41-50 and 57-66; these read RPTPSFPQPD and DLPPPLPPGP. LRR repeat units lie at residues 95–114, 115–138, 139–162, 163–183, 184–207, 208–233, 234–254, 255–278, 279–303, 304–323, 324–362, and 363–382; these read RKVP…NNFI, TELP…NNRI, RKID…KNQL, EEVP…QNHI, SRIP…HNRL, SDGV…HNIL, RKMP…SNKI, ETIP…YNKL, TDRG…HNRI, SSVP…NNSI, EKIN…GNYL, and KPPI…SVVI. Asn124 is a glycosylation site (N-linked (GlcNAc...) asparagine). 3 N-linked (GlcNAc...) asparagine glycosylation sites follow: Asn289, Asn320, and Asn327. Cys332 and Cys373 are joined by a disulfide.

The protein belongs to the small leucine-rich proteoglycan (SLRP) family. SLRP class II subfamily. Binds the basement membrane heparan sulfate proteoglycan perlecan and triple helical collagens type I and type II. In terms of processing, glycosylated; contains heparan sulfate. In terms of tissue distribution, connective tissue.

It is found in the secreted. The protein localises to the extracellular space. Its subcellular location is the extracellular matrix. In terms of biological role, may anchor basement membranes to the underlying connective tissue. The chain is Prolargin (PRELP) from Homo sapiens (Human).